A 230-amino-acid polypeptide reads, in one-letter code: Cell division ATP-binding protein FtsE (230 aa).

The ABC transporter domain occupies 4-229 (IEMRDVVKKY…DESKGEYGYD (226 aa)). ATP is bound at residue 37–44 (GPSGAGKS).

Belongs to the ABC transporter superfamily. Homodimer. Interacts with FtsX; forms a membrane-associated complex. Interacts with pcsB.

It is found in the cell membrane. It catalyses the reaction ATP + H2O = ADP + phosphate + H(+). Functionally, part of the ABC transporter FtsEX involved in cellular division. Has ATPase activity. Essential for cell division and viability. The polypeptide is Cell division ATP-binding protein FtsE (Streptococcus pneumoniae serotype 2 (strain D39 / NCTC 7466)).